Here is a 1445-residue protein sequence, read N- to C-terminus: 3'-5' RNA helicase YTHDC2 (1445 aa).

Residues 1–50 (MSRPSSVSPRPPAPSGGGTGGGGGGSGGGGGGGGGGPASCGPGGGGRAKG) are disordered. Residues 15-48 (SGGGTGGGGGGSGGGGGGGGGGPASCGPGGGGRA) show a composition bias toward gly residues. The 69-residue stretch at 53–121 (DIRIDEEVKI…NRYLTVKKKD (69 aa)) folds into the R3H domain. Positions 218-384 (VKIIKENKVV…FGSCPVIYIQ (167 aa)) constitute a Helicase ATP-binding domain. 231-238 (GETGSGKT) contacts ATP. The DEAH box motif lies at 331–334 (DEVH). 2 ANK repeats span residues 521–553 (TSATALMVAAGRGFTSQVEQLISMGANVHSKAS) and 554–586 (NGWMALDWAKHFGQTEIVDLLESYSASLEFGNL). Residues 627–799 (LLYNICHSCD…ELCLHTKLLA (173 aa)) enclose the Helicase C-terminal domain. Phosphoserine occurs at positions 1104, 1105, and 1107. The segment covering 1179-1189 (EQSAGLQQPSG) has biased composition (polar residues). Positions 1179–1303 (EQSAGLQQPS…SPSPRPNMPI (125 aa)) are disordered. Positions 1246 to 1264 (KYKDRGILHPKRSTDDRSD) are enriched in basic and acidic residues. The span at 1265-1279 (QSSVKSTDSSSYPSP) shows a compositional bias: low complexity. 3 positions are modified to phosphoserine: serine 1278, serine 1282, and serine 1296. In terms of domain architecture, YTH spans 1303 to 1433 (IRYFIMKSSN…QVGEQLLQLW (131 aa)). Residues 1309 to 1311 (KSS), tryptophan 1325, and tryptophan 1375 contribute to the RNA site.

Belongs to the DEAD box helicase family. DEAH subfamily. In terms of assembly, interacts with MEIOC; binds transcripts that regulate the mitotic cell cycle inhibiting progression into metaphase, thereby allowing meiotic prophase to proceed normally. Interacts (via ANK repeats) with XRN1. Interacts with ZCCHC4. Associates with the small ribosomal subunit. Interacts with RBM46. As to expression, present in male and female germ cells (at protein level). Highly expressed in testis. Not detected in spermatogonia next to the tubule wall but is strongly expressed in spermatocytes, suggesting that it is up-regulated in germ cells upon entry into meiosis (at protein level).

It localises to the cytoplasm. The protein localises to the perinuclear region. It catalyses the reaction ATP + H2O = ADP + phosphate + H(+). Functionally, 3'-5' RNA helicase that plays a key role in the male and female germline by promoting transition from mitotic to meiotic divisions in stem cells. Specifically recognizes and binds N6-methyladenosine (m6A)-containing RNAs, a modification present at internal sites of mRNAs and some non-coding RNAs that plays a role in the efficiency of RNA processing and stability. Essential for ensuring a successful progression of the meiotic program in the germline by regulating the level of m6A-containing RNAs. Acts by binding and promoting degradation of m6A-containing mRNAs: the 3'-5' RNA helicase activity is required for this process and RNA degradation may be mediated by XRN1 exoribonuclease. Required for both spermatogenesis and oogenesis. The polypeptide is 3'-5' RNA helicase YTHDC2 (Mus musculus (Mouse)).